The sequence spans 32 residues: Beta-1,4-galactosyltransferase 1 (32 aa).

Belongs to the glycosyltransferase 7 family. The cofactor is Mn(2+). The soluble form derives from the membrane form by proteolytic processing.

The protein localises to the golgi apparatus. Its subcellular location is the golgi stack membrane. The protein resides in the secreted. It localises to the cell membrane. It is found in the cell projection. The protein localises to the filopodium. The catalysed reaction is D-glucose + UDP-alpha-D-galactose = lactose + UDP + H(+). The enzyme catalyses an N-acetyl-beta-D-glucosaminyl derivative + UDP-alpha-D-galactose = a beta-D-galactosyl-(1-&gt;4)-N-acetyl-beta-D-glucosaminyl derivative + UDP + H(+). It catalyses the reaction N-acetyl-D-glucosamine + UDP-alpha-D-galactose = beta-D-galactosyl-(1-&gt;4)-N-acetyl-D-glucosamine + UDP + H(+). It carries out the reaction a beta-D-GlcNAc-(1-&gt;3)-beta-D-Gal-(1-&gt;4)-beta-D-Glc-(1&lt;-&gt;1)-Cer(d18:1(4E)) + UDP-alpha-D-galactose = a neolactoside nLc4Cer(d18:1(4E)) + UDP + H(+). The catalysed reaction is a beta-D-glucosylceramide + UDP-alpha-D-galactose = a beta-D-galactosyl-(1-&gt;4)-beta-D-glucosyl-(1&lt;-&gt;1)-ceramide + UDP + H(+). The enzyme catalyses a neolactoside IV(3)-beta-GlcNAc-nLc4Cer + UDP-alpha-D-galactose = a neolactoside nLc6Cer + UDP + H(+). It participates in protein modification; protein glycosylation. This protein is responsible for the synthesis of complex-type N-linked oligosaccharides in many glycoproteins as well as the carbohydrate moieties of glycolipids. The polypeptide is Beta-1,4-galactosyltransferase 1 (Rattus norvegicus (Rat)).